The following is a 261-amino-acid chain: 5-hmdU DNA kinase (261 aa).

It belongs to the thymidylate kinase family. 5-hmdU DNA kinase subfamily.

It carries out the reaction 5-hydroxymethyl-dUMP in DNA + ATP = 5-phosphomethyl-dUMP in DNA + ADP + H(+). Its function is as follows. Phosphorylates 5-hydroxymethyluracil (5hmdU) into 5-phosphomethyl-2'-deoxyuridine (5- PmdU) on DNA as a step in the pathway leading to thymidine hypermodifications in the viral genome. As a final result of the pathway of hypermodification, 5-Nalpha-putrescinylthymidine (Nalpha-PutT) substitutes for about 50% of thymidines in the viral DNA. These modifications probably prevent degradation of viral genome by the host restriction-modification antiviral defense system. This chain is 5-hmdU DNA kinase, found in Delftia phage PhiW-14 (Deftia acidovorans bacteriophage phiW-14).